We begin with the raw amino-acid sequence, 259 residues long: MKLRLKVPQWHYSLLTDYERLAIFKNAIERVVDEDDVVFDLGTGSGILAMIAAKKAKKVYAIELDPFTYDYAKENIKVNGFNNIEIIEGDASTYNFKEKADVVIAELLDTALIIEPQVKVMNSIIERGFLKEDVKIIPAKAISTIQLVEAKMSHIYYDEDIKSEEVSEEVIYEEVDFHKTNPIEVSYNIELELEKSCENLGIKLRTYTILDDKHVAGQTSMLNPPLVIPLNKKVDKGRVKINLSYRRGGDLESIKVNLG.

To M.thermoautotrophicum MTH738.

This is an uncharacterized protein from Methanocaldococcus jannaschii (strain ATCC 43067 / DSM 2661 / JAL-1 / JCM 10045 / NBRC 100440) (Methanococcus jannaschii).